The primary structure comprises 263 residues: ATP synthase subunit delta (263 aa).

It belongs to the ATPase delta chain family. In terms of assembly, F-type ATPases have 2 components, F(1) - the catalytic core - and F(0) - the membrane proton channel. F(1) has five subunits: alpha(3), beta(3), gamma(1), delta(1), epsilon(1). F(0) has three main subunits: a(1), b(2) and c(10-14). The alpha and beta chains form an alternating ring which encloses part of the gamma chain. F(1) is attached to F(0) by a central stalk formed by the gamma and epsilon chains, while a peripheral stalk is formed by the delta and b chains.

The protein resides in the cell membrane. F(1)F(0) ATP synthase produces ATP from ADP in the presence of a proton or sodium gradient. F-type ATPases consist of two structural domains, F(1) containing the extramembraneous catalytic core and F(0) containing the membrane proton channel, linked together by a central stalk and a peripheral stalk. During catalysis, ATP synthesis in the catalytic domain of F(1) is coupled via a rotary mechanism of the central stalk subunits to proton translocation. In terms of biological role, this protein is part of the stalk that links CF(0) to CF(1). It either transmits conformational changes from CF(0) to CF(1) or is implicated in proton conduction. The protein is ATP synthase subunit delta of Leifsonia xyli subsp. xyli (strain CTCB07).